We begin with the raw amino-acid sequence, 331 residues long: Putative type II secretion system C-type protein YghF (331 aa).

Residues 44-60 (MFWLMLLIISAKMAHSL) form a helical membrane-spanning segment.

This sequence belongs to the GSP C family.

It localises to the cell inner membrane. Its function is as follows. Involved in a type II secretion system (T2SS, formerly general secretion pathway, GSP) for the export of folded proteins across the outer membrane. The protein is Putative type II secretion system C-type protein YghF of Escherichia coli (strain K12).